The chain runs to 215 residues: 16S rRNA (adenine(1408)-N(1))-methyltransferase (215 aa).

S-adenosyl-L-methionine-binding positions include glycine 32, aspartate 55, 87-88 (AE), 102-107 (LMPWGS), and 191-193 (TSW).

The protein belongs to the methyltransferase superfamily. Kanamycin-apramycin resistance family.

It carries out the reaction adenosine(1408) in 16S rRNA + S-adenosyl-L-methionine = N(1)-methyladenosine(1408) in 16S rRNA + S-adenosyl-L-homocysteine + H(+). Its function is as follows. Specifically methylates the N(1) position of adenine 1408 in 16S rRNA. Confers resistance to various aminoglycosides. The polypeptide is 16S rRNA (adenine(1408)-N(1))-methyltransferase (kamB) (Streptoalloteichus hindustanus).